A 338-amino-acid chain; its full sequence is DNA-directed RNA polymerase subunit alpha (338 aa).

The alpha N-terminal domain (alpha-NTD) stretch occupies residues 1 to 234 (MIQKNWQELI…DQLQLFINFE (234 aa)). The interval 250 to 338 (FNKNLLRKVD…ELAKKLEEPY (89 aa)) is alpha C-terminal domain (alpha-CTD).

Belongs to the RNA polymerase alpha chain family. As to quaternary structure, homodimer. The RNAP catalytic core consists of 2 alpha, 1 beta, 1 beta' and 1 omega subunit. When a sigma factor is associated with the core the holoenzyme is formed, which can initiate transcription.

The enzyme catalyses RNA(n) + a ribonucleoside 5'-triphosphate = RNA(n+1) + diphosphate. Functionally, DNA-dependent RNA polymerase catalyzes the transcription of DNA into RNA using the four ribonucleoside triphosphates as substrates. This is DNA-directed RNA polymerase subunit alpha from Paramagnetospirillum magneticum (strain ATCC 700264 / AMB-1) (Magnetospirillum magneticum).